The primary structure comprises 62 residues: Synergistic-type venom protein C8S2, chain 1 (62 aa).

3 cysteine pairs are disulfide-bonded: C3-C24, C17-C42, and C46-C57.

This sequence belongs to the three-finger toxin family. Short-chain subfamily. Aminergic toxin sub-subfamily. As to quaternary structure, heterodimer of C8S2 chain 1 and chain 2 (AC P01411); disulfide-linked. In terms of tissue distribution, expressed by the venom gland.

It is found in the secreted. In terms of biological role, this protein shows a synergetic toxic effect in that it enhances the toxicity of other toxins. In Dendroaspis angusticeps (Eastern green mamba), this protein is Synergistic-type venom protein C8S2, chain 1.